The following is a 340-amino-acid chain: ATPase get3 (340 aa).

34 to 41 is an ATP binding site; the sequence is KGGVGKTT. Aspartate 63 is an active-site residue. Glutamate 242 and asparagine 269 together coordinate ATP. The Zn(2+) site is built by cysteine 280 and cysteine 283.

This sequence belongs to the arsA ATPase family. In terms of assembly, homodimer.

Its subcellular location is the cytoplasm. The protein localises to the endoplasmic reticulum. ATPase required for the post-translational delivery of tail-anchored (TA) proteins to the endoplasmic reticulum. Recognizes and selectively binds the transmembrane domain of TA proteins in the cytosol. This complex then targets to the endoplasmic reticulum by membrane-bound receptors, where the tail-anchored protein is released for insertion. This process is regulated by ATP binding and hydrolysis. ATP binding drives the homodimer towards the closed dimer state, facilitating recognition of newly synthesized TA membrane proteins. ATP hydrolysis is required for insertion. Subsequently, the homodimer reverts towards the open dimer state, lowering its affinity for the membrane-bound receptor, and returning it to the cytosol to initiate a new round of targeting. In Sclerotinia sclerotiorum (strain ATCC 18683 / 1980 / Ss-1) (White mold), this protein is ATPase get3 (get3).